The chain runs to 208 residues: 2-phospho-L-lactate guanylyltransferase (208 aa).

This sequence belongs to the CofC family. As to quaternary structure, homodimer.

It carries out the reaction (2S)-2-phospholactate + GTP + H(+) = (2S)-lactyl-2-diphospho-5'-guanosine + diphosphate. The protein operates within cofactor biosynthesis; coenzyme F420 biosynthesis. Guanylyltransferase that catalyzes the activation of (2S)-2-phospholactate (2-PL) as (2S)-lactyl-2-diphospho-5'-guanosine, via the condensation of 2-PL with GTP. It is involved in the biosynthesis of coenzyme F420, a hydride carrier cofactor. The polypeptide is 2-phospho-L-lactate guanylyltransferase (Methanosarcina acetivorans (strain ATCC 35395 / DSM 2834 / JCM 12185 / C2A)).